A 421-amino-acid polypeptide reads, in one-letter code: UDP-N-acetylglucosamine 1-carboxyvinyltransferase (421 aa).

Position 22–23 (Lys22–Asn23) interacts with phosphoenolpyruvate. Arg92 lines the UDP-N-acetyl-alpha-D-glucosamine pocket. Residue Cys116 is the Proton donor of the active site. Cys116 carries the post-translational modification 2-(S-cysteinyl)pyruvic acid O-phosphothioketal. Residues Asp306 and Val328 each contribute to the UDP-N-acetyl-alpha-D-glucosamine site.

It belongs to the EPSP synthase family. MurA subfamily.

It localises to the cytoplasm. It catalyses the reaction phosphoenolpyruvate + UDP-N-acetyl-alpha-D-glucosamine = UDP-N-acetyl-3-O-(1-carboxyvinyl)-alpha-D-glucosamine + phosphate. It participates in cell wall biogenesis; peptidoglycan biosynthesis. Its function is as follows. Cell wall formation. Adds enolpyruvyl to UDP-N-acetylglucosamine. The protein is UDP-N-acetylglucosamine 1-carboxyvinyltransferase of Thermotoga maritima (strain ATCC 43589 / DSM 3109 / JCM 10099 / NBRC 100826 / MSB8).